Here is a 267-residue protein sequence, read N- to C-terminus: Probable beta-lactamase YbxI (267 aa).

The N-terminal stretch at 1-23 is a signal peptide; the sequence is MKKWIYVVLVLSIAGIGGFSVHA. The active-site Acyl-ester intermediate is the S76. An N6-carboxylysine modification is found at K79. 214-216 contacts substrate; that stretch reads KTG.

This sequence belongs to the class-D beta-lactamase family.

The enzyme catalyses a beta-lactam + H2O = a substituted beta-amino acid. In Bacillus subtilis (strain 168), this protein is Probable beta-lactamase YbxI (ybxI).